We begin with the raw amino-acid sequence, 351 residues long: Dihydroorotate dehydrogenase (quinone) (351 aa).

Residues 67 to 71 (AGFDK) and Thr91 contribute to the FMN site. Lys71 contacts substrate. 116 to 120 (NAMGF) serves as a coordination point for substrate. FMN-binding residues include Asn145 and Asn178. Asn178 contacts substrate. The active-site Nucleophile is the Ser181. Asn183 contacts substrate. FMN is bound by residues Lys214 and Thr242. A substrate-binding site is contributed by 243–244 (NT). Residues Gly262, Gly291, and 312–313 (YS) each bind FMN.

Belongs to the dihydroorotate dehydrogenase family. Type 2 subfamily. Monomer. FMN serves as cofactor.

It is found in the cell membrane. It carries out the reaction (S)-dihydroorotate + a quinone = orotate + a quinol. The protein operates within pyrimidine metabolism; UMP biosynthesis via de novo pathway; orotate from (S)-dihydroorotate (quinone route): step 1/1. Functionally, catalyzes the conversion of dihydroorotate to orotate with quinone as electron acceptor. This is Dihydroorotate dehydrogenase (quinone) (pyrD) from Helicobacter pylori (strain ATCC 700392 / 26695) (Campylobacter pylori).